A 71-amino-acid polypeptide reads, in one-letter code: Mitotic-spindle organizing protein 1B (71 aa).

This sequence belongs to the MOZART1 family. Homo- and heteromultimer. Part of the gamma-tubulin complex. Interacts with TUBB2/TUBB3, GIP2, GCP3 and TSA1 (via C-terminal domain). As to expression, mostly expressed in siliques and flowers, and, to a lower extent, in leaves, roots and seedlings, with highest levels in young tissues and meristematic cells, and the vasculature.

It is found in the cytoplasm. The protein resides in the cytoskeleton. Its subcellular location is the microtubule organizing center. The protein localises to the spindle. It localises to the nucleus. It is found in the phragmoplast. The protein resides in the nucleus envelope. Required for gamma-tubulin complex recruitment to the microtubule organizing centers (MTOCs). During mitosis, modulates gamma-tubulin complex localization, spindle stability and chromosomal segregation. Necessary for gametophyte development and embryogenesis. This chain is Mitotic-spindle organizing protein 1B (GIP1), found in Arabidopsis thaliana (Mouse-ear cress).